The sequence spans 122 residues: Large ribosomal subunit protein uL14 (122 aa).

Belongs to the universal ribosomal protein uL14 family. As to quaternary structure, part of the 50S ribosomal subunit. Forms a cluster with proteins L3 and L19. In the 70S ribosome, L14 and L19 interact and together make contacts with the 16S rRNA in bridges B5 and B8.

In terms of biological role, binds to 23S rRNA. Forms part of two intersubunit bridges in the 70S ribosome. This chain is Large ribosomal subunit protein uL14, found in Nitratidesulfovibrio vulgaris (strain ATCC 29579 / DSM 644 / CCUG 34227 / NCIMB 8303 / VKM B-1760 / Hildenborough) (Desulfovibrio vulgaris).